The following is an 86-amino-acid chain: MSKGHSLQDPYLNTLRKEKVPVSIYLVNGIKLQGQIESFDQFVVLLKNTVSQMVYKHAISTVVPARPVRLPSPSDAEHGDSEPGNA.

Residues 9–68 (DPYLNTLRKEKVPVSIYLVNGIKLQGQIESFDQFVVLLKNTVSQMVYKHAISTVVPARPV) enclose the Sm domain. Residues 66–86 (RPVRLPSPSDAEHGDSEPGNA) form a disordered region. Over residues 75–86 (DAEHGDSEPGNA) the composition is skewed to basic and acidic residues.

Belongs to the Hfq family. In terms of assembly, homohexamer.

Its function is as follows. RNA chaperone that binds small regulatory RNA (sRNAs) and mRNAs to facilitate mRNA translational regulation in response to envelope stress, environmental stress and changes in metabolite concentrations. Also binds with high specificity to tRNAs. The sequence is that of RNA-binding protein Hfq from Pseudomonas entomophila (strain L48).